The sequence spans 348 residues: MTKRGFTYKDAGVDIDAGNTFVGLIKPFVKATSRPEVISDIGGFGGLFSLNTNKYRNPVLVSGTDGVGTKLKIAMMADRHDTVGIDLVAMCVNDIIVQGAEPLFFLDYFATGKLDPQRGAAVVKGISEGCVQAGCALIGGETAEMPGFYQPGEYDLAGFTVGVVERDNIIDGSSITVGNRLVGIASSGLHSNGYSLARKIIFESMGLGIDSILPGLGMSAADALLTPTKIYVKTILNLLRDFHVNGIAHITGGGLLENVPRVLPNGCKALVHLDSCPLPPLFSLLQEAGSVERDEMYRTFNCGIGMVLAVPENEADEILIRLSGLQEKAFIIGEIAKCEPGAEMVELV.

This sequence belongs to the AIR synthase family.

The protein localises to the cytoplasm. The catalysed reaction is 2-formamido-N(1)-(5-O-phospho-beta-D-ribosyl)acetamidine + ATP = 5-amino-1-(5-phospho-beta-D-ribosyl)imidazole + ADP + phosphate + H(+). Its pathway is purine metabolism; IMP biosynthesis via de novo pathway; 5-amino-1-(5-phospho-D-ribosyl)imidazole from N(2)-formyl-N(1)-(5-phospho-D-ribosyl)glycinamide: step 2/2. This Geobacter sulfurreducens (strain ATCC 51573 / DSM 12127 / PCA) protein is Phosphoribosylformylglycinamidine cyclo-ligase.